Here is a 430-residue protein sequence, read N- to C-terminus: Glutamate-1-semialdehyde 2,1-aminomutase (430 aa).

The residue at position 267 (Lys267) is an N6-(pyridoxal phosphate)lysine.

The protein belongs to the class-III pyridoxal-phosphate-dependent aminotransferase family. HemL subfamily. In terms of assembly, homodimer. It depends on pyridoxal 5'-phosphate as a cofactor.

Its subcellular location is the cytoplasm. The catalysed reaction is (S)-4-amino-5-oxopentanoate = 5-aminolevulinate. The protein operates within porphyrin-containing compound metabolism; protoporphyrin-IX biosynthesis; 5-aminolevulinate from L-glutamyl-tRNA(Glu): step 2/2. In Natranaerobius thermophilus (strain ATCC BAA-1301 / DSM 18059 / JW/NM-WN-LF), this protein is Glutamate-1-semialdehyde 2,1-aminomutase.